Here is a 185-residue protein sequence, read N- to C-terminus: MADEQLNEKDLNVEETGAGNAADTRVLELEEQLAAAKDQALRAVADLQNVRRRAEQDVEKAHKFALEKFSSDLLPVIDSLELALAHSSAEDEHVKQIREGVELTLKMFQDTLKRYNLEAVDPHGQPFNPEHHQAMAMQENAEVEPNSVLNVFQKGYLLNGRLLRPAMVVVSKAPSAAQPSINEKA.

Basic and acidic residues predominate over residues 1-12; that stretch reads MADEQLNEKDLN. The interval 1 to 22 is disordered; it reads MADEQLNEKDLNVEETGAGNAA.

It belongs to the GrpE family. Homodimer.

It is found in the cytoplasm. Its function is as follows. Participates actively in the response to hyperosmotic and heat shock by preventing the aggregation of stress-denatured proteins, in association with DnaK and GrpE. It is the nucleotide exchange factor for DnaK and may function as a thermosensor. Unfolded proteins bind initially to DnaJ; upon interaction with the DnaJ-bound protein, DnaK hydrolyzes its bound ATP, resulting in the formation of a stable complex. GrpE releases ADP from DnaK; ATP binding to DnaK triggers the release of the substrate protein, thus completing the reaction cycle. Several rounds of ATP-dependent interactions between DnaJ, DnaK and GrpE are required for fully efficient folding. The sequence is that of Protein GrpE from Pseudomonas putida (strain ATCC 700007 / DSM 6899 / JCM 31910 / BCRC 17059 / LMG 24140 / F1).